The primary structure comprises 111 residues: uncharacterized protein (111 aa).

This is an uncharacterized protein from Caenorhabditis elegans.